The sequence spans 134 residues: Large ribosomal subunit protein bL20 (134 aa).

It belongs to the bacterial ribosomal protein bL20 family.

In terms of biological role, binds directly to 23S ribosomal RNA and is necessary for the in vitro assembly process of the 50S ribosomal subunit. It is not involved in the protein synthesizing functions of that subunit. The chain is Large ribosomal subunit protein bL20 from Brucella anthropi (strain ATCC 49188 / DSM 6882 / CCUG 24695 / JCM 21032 / LMG 3331 / NBRC 15819 / NCTC 12168 / Alc 37) (Ochrobactrum anthropi).